A 157-amino-acid polypeptide reads, in one-letter code: uncharacterized protein (157 aa).

Residues 1 to 17 (MSMKTKAAFHLVLFGLA) form the signal peptide. Cysteine 18 carries N-palmitoyl cysteine lipidation. Residue cysteine 18 is the site of S-diacylglycerol cysteine attachment. 3 helical membrane passes run 42-64 (MVFD…YLYL), 98-120 (ASYI…YPLF), and 124-146 (IPFF…YVIS).

It localises to the cell membrane. This is an uncharacterized protein from Bacillus subtilis (strain 168).